The chain runs to 113 residues: Dynein light chain Tctex-type 1 (113 aa).

Met-1 is modified (N-acetylmethionine). The tract at residues 41-113 (QWTTNVLEQT…CIVSTFGLSI (73 aa)) is interaction with GNB1.

Belongs to the dynein light chain Tctex-type family. Homodimer. The cytoplasmic dynein 1 complex consists of two catalytic heavy chains (HCs) and a number of non-catalytic subunits presented by intermediate chains (ICs), light intermediate chains (LICs) and light chains (LCs); the composition seems to vary in respect to the IC, LIC and LC composition. The heavy chain homodimer serves as a scaffold for the probable homodimeric assembly of the respective non-catalytic subunits. The ICs and LICs bind directly to the HC dimer and the LCs assemble on the IC dimer. DYNLT1 and DYNLT3 compete for association with dynein IC (DYNC1I1 or DYNC1I2). Self-associates. Interacts with RHO. Interacts with DYNC1I1 and DYNC1I2. Interacts with DOC2A, DOC2B and SCN10A. Interacts with PVR. Interacts with SVIL isoform 2. Interacts with GNB1; the interaction occurs in presence of guanine nucleotide-binding protein G(T) subunit gamma; the interaction diminishes the association of DYNLT1 with dynein IC (DYNC1I1 or DYNC1I2). Interacts with GNB2, GNB3 and GNB5; the interactions occur in presence of guanine nucleotide-binding protein G(T) subunit gamma. Interacts with ACVR2B and ARHGEF2. Interacts with DNAI4. Interacts with CFAP61. Post-translationally, phosphorylated by BMPR2. The phosphorylation status is proposed to regulate the association with the cytoplasmic dynein complex and may have role in cytoplasmic dynein cargo release. High level in testis (germ cell-specific). Expressed in sperm (at protein level). 200-fold lower in liver, brain, heart, spleen, and kidney. Levels in thymus and two embryonal carcinoma cell lines were several-fold higher than this low constitutive level.

The protein localises to the golgi apparatus. Its subcellular location is the cytoplasm. The protein resides in the cytoskeleton. It is found in the spindle. Its function is as follows. Acts as one of several non-catalytic accessory components of the cytoplasmic dynein 1 complex that are thought to be involved in linking dynein to cargos and to adapter proteins that regulate dynein function. Cytoplasmic dynein 1 acts as a motor for the intracellular retrograde motility of vesicles and organelles along microtubules. Binds to transport cargos and is involved in apical cargo transport such as rhodopsin-bearing vesicles in polarized epithelia. May also be a accessory component of axonemal dynein. Plays an important role in male germ cell development and function. Candidate for involvement in male sterility. Functionally, plays a role in neuronal morphogenesis; the function is independent of cytoplasmic dynein and seems to be coupled to regulation of the actin cytoskeleton by enhancing Rac1 activity. The function in neurogenesis may be regulated by association with a G-protein beta-gamma dimer. May function as a receptor-independent activator of heterotrimeric G-protein signaling; the activation appears to be independent of a nucleotide exchange. Plays a role in regulating neurogenesis; inhibits the genesis of neurons from precursor cells during cortical development presumably by antagonizing ARHGEF2. Unrelated to the role in retrograde microtubule-associated movement may play a role in the dimerization of cytoplasmic proteins/domains such as for ACVR2B. Binds to the cytoplasmic domain of ACVR2B and, in vitro, inhibits ACVR2B signaling. Involved in the regulation of mitotic spindle orientation. The protein is Dynein light chain Tctex-type 1 (Dynlt1) of Mus musculus (Mouse).